A 264-amino-acid chain; its full sequence is Indole-3-glycerol phosphate synthase (264 aa).

It belongs to the TrpC family.

It catalyses the reaction 1-(2-carboxyphenylamino)-1-deoxy-D-ribulose 5-phosphate + H(+) = (1S,2R)-1-C-(indol-3-yl)glycerol 3-phosphate + CO2 + H2O. Its pathway is amino-acid biosynthesis; L-tryptophan biosynthesis; L-tryptophan from chorismate: step 4/5. In Xylella fastidiosa (strain M23), this protein is Indole-3-glycerol phosphate synthase.